The primary structure comprises 315 residues: tRNA-dihydrouridine(16) synthase (315 aa).

FMN contacts are provided by residues 7-9 (PME) and Q68. C98 (proton donor) is an active-site residue. FMN-binding positions include K139, 200–202 (NGE), and 224–225 (GR).

It belongs to the Dus family. DusC subfamily. Requires FMN as cofactor.

The catalysed reaction is 5,6-dihydrouridine(16) in tRNA + NADP(+) = uridine(16) in tRNA + NADPH + H(+). The enzyme catalyses 5,6-dihydrouridine(16) in tRNA + NAD(+) = uridine(16) in tRNA + NADH + H(+). In terms of biological role, catalyzes the synthesis of 5,6-dihydrouridine (D), a modified base found in the D-loop of most tRNAs, via the reduction of the C5-C6 double bond in target uridines. DusC specifically modifies U16 in tRNAs. This is tRNA-dihydrouridine(16) synthase from Escherichia coli (strain K12).